The primary structure comprises 69 residues: uncharacterized protein (69 aa).

Interacts with the RNA polymerase core.

This is an uncharacterized protein from Bacillus subtilis (strain 168).